We begin with the raw amino-acid sequence, 30 residues long: Cyclotide cter-G (30 aa).

A cross-link (cyclopeptide (Gly-Asn)) is located at residues 1–30 (GLPCGESCVFIPCITTVVGCSCKNKVCYNN). Cystine bridges form between Cys4-Cys20, Cys8-Cys22, and Cys13-Cys27.

Contains 3 disulfide bonds. Post-translationally, this is a cyclic peptide.

Its function is as follows. Probably participates in a plant defense mechanism. This chain is Cyclotide cter-G, found in Clitoria ternatea (Butterfly pea).